The following is a 729-amino-acid chain: Glycine--tRNA ligase, mitochondrial 1 (729 aa).

An N-acetylmethionine modification is found at Met1. A mitochondrion-targeting transit peptide spans 1-28; the sequence is MRIFSTFVFHRRQQIFNLRQFQTTTILR. The 57-residue stretch at 50–106 folds into the WHEP-TRS domain; it reads SLSEKSSSVEAQGNAVRALKASRAAKPEIDAAIEQLNKLKLEKSTVEKELQSIISSS. Glu296 contacts glycine. ATP is bound by residues 328-330 and 339-340; these read RNE and RV. Glu347 serves as a coordination point for glycine. Residue 454–455 participates in ATP binding; that stretch reads EC. 575–577 is a binding site for glycine; it reads EPS. Arg582 is an ATP binding site.

This sequence belongs to the class-II aminoacyl-tRNA synthetase family. Homodimer.

The protein resides in the mitochondrion. The protein localises to the cytoplasm. Its subcellular location is the cytosol. It carries out the reaction tRNA(Gly) + glycine + ATP = glycyl-tRNA(Gly) + AMP + diphosphate. It catalyses the reaction 2 ATP + H(+) = P(1),P(4)-bis(5'-adenosyl) tetraphosphate + diphosphate. In terms of biological role, catalyzes the ATP-dependent ligation of glycine to the 3'-end of its cognate tRNA, via the formation of an aminoacyl-adenylate intermediate (Gly-AMP). Also produces diadenosine tetraphosphate (Ap4A), a universal pleiotropic signaling molecule needed for cell regulation pathways, by direct condensation of 2 ATPs. Thereby, may play a special role in Ap4A homeostasis. The chain is Glycine--tRNA ligase, mitochondrial 1 from Arabidopsis thaliana (Mouse-ear cress).